Reading from the N-terminus, the 387-residue chain is Patatin-03 (387 aa).

The N-terminal stretch at 1-23 (MATTKSVLVLIFMILATTSSTFA) is a signal peptide. The region spanning 32 to 230 (LSIDGGGIKG…TVADPALLSV (199 aa)) is the PNPLA domain. The GXGXXG motif lies at 36–41 (GGGIKG). Positions 75–79 (GTSTG) match the GXSXG motif. The active-site Nucleophile is Ser77. Residues Asn115 and Asn203 are each glycosylated (N-linked (GlcNAc...) asparagine). Asp216 serves as the catalytic Proton acceptor. The DGA/G signature appears at 216–218 (DGA).

The protein belongs to the patatin family. Tuber.

It is found in the vacuole. Its function is as follows. Probable lipolytic acyl hydrolase (LAH), an activity which is thought to be involved in the response of tubers to pathogens. This chain is Patatin-03, found in Solanum tuberosum (Potato).